The sequence spans 267 residues: Protein TIFY 7 (267 aa).

Residues 113-148 enclose the Tify domain; the sequence is SSGSSPQLTIFYGGTISVFNDISPDKAQAIMLCAGN. A Jas motif is present at residues 220-244; sequence PQARKASLARFLEKRKERLMSAMPY. Residues 222-229 carry the Nuclear localization signal motif; it reads ARKASLAR.

This sequence belongs to the TIFY/JAZ family. In terms of assembly, homo- and heterodimer. Interacts with MYC2, MYC3, MYC4, COI1, AFPH2/NINJA, TIFY10A/JAZ1, TIFY10B/JAZ2, TIFY6B/JAZ3, TIFY5A/JAZ8, TIFY9/JAZ10 and TIFY3A/JAZ11. Interacts with RHD6 and RSL1. Ubiquitinated. Targeted for degradation by the SCF(COI1) E3 ubiquitin ligase-proteasome pathway during jasmonate signaling.

It localises to the nucleus. In terms of biological role, repressor of jasmonate responses. Jasmonoyl-isoleucine (JA-Ile) specifically promotes COI1-TIFY7/JAZ9 interaction. Interacts with and suppresses RHD6 and RSL1 transcription factor activities to negatively regulate jasmonate-stimulated root hair development. This chain is Protein TIFY 7 (TIFY7), found in Arabidopsis thaliana (Mouse-ear cress).